A 292-amino-acid polypeptide reads, in one-letter code: NAD kinase (292 aa).

The Proton acceptor role is filled by D73. NAD(+) is bound by residues 73–74, 147–148, H158, R175, D177, 188–193, and Q247; these read DG, NE, and TAYSLS.

Belongs to the NAD kinase family. It depends on a divalent metal cation as a cofactor.

The protein resides in the cytoplasm. It catalyses the reaction NAD(+) + ATP = ADP + NADP(+) + H(+). Involved in the regulation of the intracellular balance of NAD and NADP, and is a key enzyme in the biosynthesis of NADP. Catalyzes specifically the phosphorylation on 2'-hydroxyl of the adenosine moiety of NAD to yield NADP. The protein is NAD kinase of Shigella boydii serotype 4 (strain Sb227).